The following is a 480-amino-acid chain: Glutamate--tRNA ligase (480 aa).

The short motif at 12–22 (PSPTGAPHLGL) is the 'HIGH' region element. A 'KMSKS' region motif is present at residues 255-259 (KLSKR). Position 258 (lysine 258) interacts with ATP.

It belongs to the class-I aminoacyl-tRNA synthetase family. Glutamate--tRNA ligase type 1 subfamily. As to quaternary structure, monomer.

It localises to the cytoplasm. The enzyme catalyses tRNA(Glu) + L-glutamate + ATP = L-glutamyl-tRNA(Glu) + AMP + diphosphate. In terms of biological role, catalyzes the attachment of glutamate to tRNA(Glu) in a two-step reaction: glutamate is first activated by ATP to form Glu-AMP and then transferred to the acceptor end of tRNA(Glu). In Tropheryma whipplei (strain TW08/27) (Whipple's bacillus), this protein is Glutamate--tRNA ligase.